The primary structure comprises 130 residues: Ribosome-binding factor A (130 aa).

This sequence belongs to the RbfA family. Monomer. Binds 30S ribosomal subunits, but not 50S ribosomal subunits or 70S ribosomes.

The protein localises to the cytoplasm. One of several proteins that assist in the late maturation steps of the functional core of the 30S ribosomal subunit. Associates with free 30S ribosomal subunits (but not with 30S subunits that are part of 70S ribosomes or polysomes). Required for efficient processing of 16S rRNA. May interact with the 5'-terminal helix region of 16S rRNA. This chain is Ribosome-binding factor A, found in Prochlorococcus marinus (strain MIT 9215).